Consider the following 938-residue polypeptide: Probable glutamyl endopeptidase, chloroplastic (938 aa).

Residues Met1–Val54 constitute a chloroplast transit peptide. Low complexity predominate over residues Gly58–Gly76. Residues Gly58–Leu77 are disordered. Catalysis depends on charge relay system residues Ser762, Asp836, and His870. Residues Ser897 to Val913 show a composition bias toward polar residues. The segment at Ser897–Leu938 is disordered.

This sequence belongs to the peptidase S9D family.

Its subcellular location is the plastid. It is found in the chloroplast stroma. Serine-type protease active in vitro against the LHCII N-terminal. Cleaves its substrate on the carboxy-side of Glu residues. The sequence is that of Probable glutamyl endopeptidase, chloroplastic (GEP) from Oryza sativa subsp. japonica (Rice).